The chain runs to 782 residues: Shutoff protein (782 aa).

The interval 262 to 329 is binding to host EIF4G; sequence VMNQLLIKRA…AVLVTVELEC (68 aa). The RRM domain maps to 332–450; it reads RFFSDITTLR…SLWTGFDERT (119 aa). Phosphotyrosine; by host is present on residues Tyr-349 and Tyr-665. The interval 715–760 is disordered; sequence GGRILGESGRGRGRGLGRMGGGGGGQPRRGSRGGGGRFQGRSDRRQ. Residues 728–752 are compositionally biased toward gly residues; it reads RGLGRMGGGGGGQPRRGSRGGGGRF.

The protein belongs to the adenoviridae shutoff protein family. Monomer. Interacts with hexon protein; this interaction allows chaperoning and trimerization of hexon proteins. Interacts (via N-terminus) with host initiation factor EIF4G (via C-terminus). Interacts (via RRM domain) with viral mRNAs that contain the tripartite leader; this interaction allows ribosome shunting and expression of viral late mRNAs. Might be cleaved by the viral protease. In terms of processing, phosphorylated. Tyrosine phosphorylation enhances preferential binding to tripartite leader mRNAs and allows ribosome shunting. Post-translationally, methylated. Asymmetric dimethylation by host PRMT1 of the Arg/Gly-rich region may regulate shutoff protein binding to hexon and promote the capsid assembly in the nucleus.

The protein localises to the host cytoplasm. In terms of biological role, protein that inhibits host translation while promoting late viral translation by ribosome shunting. Blocks host cap-dependent translation by binding to eIF4G, displacing MKNK1 from cap initiation complexes and preventing EIF4E phosphorylation. Binds to the tripartite leader sequence of viral late mRNAs and recruits host eIF4G, PABPC1/poly-A binding protein and 40S ribosomes subunits on viral mRNAs, allowing ribosome shunting and efficient translation of late viral mRNAs even though conventional translation via ribosome scanning from the cap has been shut off in the host cell. During assembly, acts as a chaperone protein that helps hexon proteins assembly into trimers. This is Shutoff protein from Human adenovirus A serotype 12 (HAdV-12).